Consider the following 433-residue polypeptide: 3-phosphoshikimate 1-carboxyvinyltransferase (433 aa).

Residues lysine 21, serine 22, and arginine 26 each contribute to the 3-phosphoshikimate site. Lysine 21 is a phosphoenolpyruvate binding site. Phosphoenolpyruvate-binding residues include glycine 92 and arginine 120. The 3-phosphoshikimate site is built by serine 166, glutamine 168, aspartate 317, and lysine 344. Phosphoenolpyruvate is bound at residue glutamine 168. Aspartate 317 functions as the Proton acceptor in the catalytic mechanism. Residues arginine 348 and arginine 391 each contribute to the phosphoenolpyruvate site.

The protein belongs to the EPSP synthase family. As to quaternary structure, monomer.

It is found in the cytoplasm. It carries out the reaction 3-phosphoshikimate + phosphoenolpyruvate = 5-O-(1-carboxyvinyl)-3-phosphoshikimate + phosphate. Its pathway is metabolic intermediate biosynthesis; chorismate biosynthesis; chorismate from D-erythrose 4-phosphate and phosphoenolpyruvate: step 6/7. Catalyzes the transfer of the enolpyruvyl moiety of phosphoenolpyruvate (PEP) to the 5-hydroxyl of shikimate-3-phosphate (S3P) to produce enolpyruvyl shikimate-3-phosphate and inorganic phosphate. The chain is 3-phosphoshikimate 1-carboxyvinyltransferase from Caldicellulosiruptor bescii (strain ATCC BAA-1888 / DSM 6725 / KCTC 15123 / Z-1320) (Anaerocellum thermophilum).